Here is a 32-residue protein sequence, read N- to C-terminus: U6-ctenitoxin-Pr1a (32 aa).

Intrachain disulfides connect cysteine 3–cysteine 17, cysteine 10–cysteine 21, and cysteine 16–cysteine 30.

In terms of tissue distribution, expressed by the venom gland.

It localises to the secreted. The sequence is that of U6-ctenitoxin-Pr1a from Phoneutria reidyi (Brazilian Amazonian armed spider).